Consider the following 271-residue polypeptide: Undecaprenyl-diphosphatase (271 aa).

The next 8 helical transmembrane spans lie at 5–25, 43–63, 80–100, 109–129, 145–165, 186–206, 215–235, and 246–266; these read LLIK…LPIS, FATM…VYYF, GFNL…IGIL, LFSP…MIVI, VSTS…FPGM, AEFS…FELV, LEWE…LIVV, and VLKP…FLIA.

The protein belongs to the UppP family.

The protein localises to the cell membrane. The enzyme catalyses di-trans,octa-cis-undecaprenyl diphosphate + H2O = di-trans,octa-cis-undecaprenyl phosphate + phosphate + H(+). Functionally, catalyzes the dephosphorylation of undecaprenyl diphosphate (UPP). Confers resistance to bacitracin. The protein is Undecaprenyl-diphosphatase of Caldanaerobacter subterraneus subsp. tengcongensis (strain DSM 15242 / JCM 11007 / NBRC 100824 / MB4) (Thermoanaerobacter tengcongensis).